We begin with the raw amino-acid sequence, 186 residues long: Adenylate kinase (186 aa).

11-16 (GAGKGT) provides a ligand contact to ATP. The NMP stretch occupies residues 31–60 (STGDILRAAVKNGTAMGIEAKKYMDAGDLV). Residues threonine 32, arginine 37, 58-60 (DLV), 86-89 (GFPR), and glutamine 93 each bind AMP. The segment at 127–137 (GRAIKEGRSDD) is LID. Residue arginine 128 participates in ATP binding. Arginine 134 and arginine 145 together coordinate AMP. Glycine 173 serves as a coordination point for ATP.

Belongs to the adenylate kinase family. Monomer.

Its subcellular location is the cytoplasm. The catalysed reaction is AMP + ATP = 2 ADP. The protein operates within purine metabolism; AMP biosynthesis via salvage pathway; AMP from ADP: step 1/1. In terms of biological role, catalyzes the reversible transfer of the terminal phosphate group between ATP and AMP. Plays an important role in cellular energy homeostasis and in adenine nucleotide metabolism. The polypeptide is Adenylate kinase (Leptospira biflexa serovar Patoc (strain Patoc 1 / Ames)).